A 218-amino-acid polypeptide reads, in one-letter code: Probable GTP-binding protein EngB (218 aa).

One can recognise an EngB-type G domain in the interval 21-192 (NAPQIALAGR…WQELHRLAFP (172 aa)). Residues 29–36 (GRSNVGKS), 56–60 (GKTRS), 75–78 (DLPG), 142–145 (TKAD), and 171–173 (FSS) each bind GTP. 2 residues coordinate Mg(2+): serine 36 and threonine 58. Residues 194-218 (MAFDTPSDGAPEPADEPEAASERAE) form a disordered region.

The protein belongs to the TRAFAC class TrmE-Era-EngA-EngB-Septin-like GTPase superfamily. EngB GTPase family. The cofactor is Mg(2+).

In terms of biological role, necessary for normal cell division and for the maintenance of normal septation. This is Probable GTP-binding protein EngB from Oleidesulfovibrio alaskensis (strain ATCC BAA-1058 / DSM 17464 / G20) (Desulfovibrio alaskensis).